The following is a 548-amino-acid chain: Chaperonin GroEL (548 aa).

ATP contacts are provided by residues 30–33 (TLGP), lysine 51, 87–91 (DGTTT), glycine 415, 479–481 (NAA), and aspartate 495. The disordered stretch occupies residues 525–548 (PKEDKTSDASSSPAGGMGGMGGMM). The segment covering 539–548 (GGMGGMGGMM) has biased composition (gly residues).

Belongs to the chaperonin (HSP60) family. Forms a cylinder of 14 subunits composed of two heptameric rings stacked back-to-back. Interacts with the co-chaperonin GroES.

It localises to the cytoplasm. It catalyses the reaction ATP + H2O + a folded polypeptide = ADP + phosphate + an unfolded polypeptide.. In terms of biological role, together with its co-chaperonin GroES, plays an essential role in assisting protein folding. The GroEL-GroES system forms a nano-cage that allows encapsulation of the non-native substrate proteins and provides a physical environment optimized to promote and accelerate protein folding. The sequence is that of Chaperonin GroEL from Buchnera aphidicola subsp. Rhopalosiphum maidis.